A 398-amino-acid polypeptide reads, in one-letter code: S-adenosylmethionine decarboxylase proenzyme (398 aa).

Active-site residues include Glu-18 and Glu-21. The active-site Schiff-base intermediate with substrate; via pyruvic acid is the Ser-78. Ser-78 bears the Pyruvic acid (Ser); by autocatalysis mark. Cys-92 functions as the Proton donor; for catalytic activity in the catalytic mechanism. Active-site proton acceptor; for processing activity residues include Ser-243 and His-256.

The protein belongs to the eukaryotic AdoMetDC family. Pyruvate serves as cofactor. Is synthesized initially as an inactive proenzyme. Formation of the active enzyme involves a self-maturation process in which the active site pyruvoyl group is generated from an internal serine residue via an autocatalytic post-translational modification. Two non-identical subunits are generated from the proenzyme in this reaction, and the pyruvate is formed at the N-terminus of the alpha chain, which is derived from the carboxyl end of the proenzyme. The post-translation cleavage follows an unusual pathway, termed non-hydrolytic serinolysis, in which the side chain hydroxyl group of the serine supplies its oxygen atom to form the C-terminus of the beta chain, while the remainder of the serine residue undergoes an oxidative deamination to produce ammonia and the pyruvoyl group blocking the N-terminus of the alpha chain.

The catalysed reaction is S-adenosyl-L-methionine + H(+) = S-adenosyl 3-(methylsulfanyl)propylamine + CO2. The protein operates within amine and polyamine biosynthesis; S-adenosylmethioninamine biosynthesis; S-adenosylmethioninamine from S-adenosyl-L-methionine: step 1/1. The protein is S-adenosylmethionine decarboxylase proenzyme (SAMDC) of Oryza sativa subsp. indica (Rice).